Here is a 360-residue protein sequence, read N- to C-terminus: UDP-N-acetylglucosamine--N-acetylmuramyl-(pentapeptide) pyrophosphoryl-undecaprenol N-acetylglucosamine transferase (360 aa).

UDP-N-acetyl-alpha-D-glucosamine-binding positions include 12 to 14 (TAG), Ser198, and Gln289.

Belongs to the glycosyltransferase 28 family. MurG subfamily.

It localises to the cell membrane. The catalysed reaction is Mur2Ac(oyl-L-Ala-gamma-D-Glu-L-Lys-D-Ala-D-Ala)-di-trans,octa-cis-undecaprenyl diphosphate + UDP-N-acetyl-alpha-D-glucosamine = beta-D-GlcNAc-(1-&gt;4)-Mur2Ac(oyl-L-Ala-gamma-D-Glu-L-Lys-D-Ala-D-Ala)-di-trans,octa-cis-undecaprenyl diphosphate + UDP + H(+). Its pathway is cell wall biogenesis; peptidoglycan biosynthesis. In terms of biological role, cell wall formation. Catalyzes the transfer of a GlcNAc subunit on undecaprenyl-pyrophosphoryl-MurNAc-pentapeptide (lipid intermediate I) to form undecaprenyl-pyrophosphoryl-MurNAc-(pentapeptide)GlcNAc (lipid intermediate II). This is UDP-N-acetylglucosamine--N-acetylmuramyl-(pentapeptide) pyrophosphoryl-undecaprenol N-acetylglucosamine transferase from Streptococcus equi subsp. zooepidemicus (strain H70).